A 745-amino-acid polypeptide reads, in one-letter code: Phosphoribosylformylglycinamidine synthase subunit PurL (745 aa).

His47 is an active-site residue. The ATP site is built by Tyr50 and Lys90. Glu92 contacts Mg(2+). Residues Ser93–His96 and Arg115 each bind substrate. His94 serves as the catalytic Proton acceptor. Residue Asp116 participates in Mg(2+) binding. Gln240 serves as a coordination point for substrate. Position 268 (Asp268) interacts with Mg(2+). Residue Glu312–Gln314 participates in substrate binding. The ATP site is built by Asn501 and Gly538. Asn539 is a Mg(2+) binding site. Residue Ser541 coordinates substrate.

It belongs to the FGAMS family. As to quaternary structure, monomer. Part of the FGAM synthase complex composed of 1 PurL, 1 PurQ and 2 PurS subunits.

The protein resides in the cytoplasm. The enzyme catalyses N(2)-formyl-N(1)-(5-phospho-beta-D-ribosyl)glycinamide + L-glutamine + ATP + H2O = 2-formamido-N(1)-(5-O-phospho-beta-D-ribosyl)acetamidine + L-glutamate + ADP + phosphate + H(+). The protein operates within purine metabolism; IMP biosynthesis via de novo pathway; 5-amino-1-(5-phospho-D-ribosyl)imidazole from N(2)-formyl-N(1)-(5-phospho-D-ribosyl)glycinamide: step 1/2. Its function is as follows. Part of the phosphoribosylformylglycinamidine synthase complex involved in the purines biosynthetic pathway. Catalyzes the ATP-dependent conversion of formylglycinamide ribonucleotide (FGAR) and glutamine to yield formylglycinamidine ribonucleotide (FGAM) and glutamate. The FGAM synthase complex is composed of three subunits. PurQ produces an ammonia molecule by converting glutamine to glutamate. PurL transfers the ammonia molecule to FGAR to form FGAM in an ATP-dependent manner. PurS interacts with PurQ and PurL and is thought to assist in the transfer of the ammonia molecule from PurQ to PurL. This Leptospira interrogans serogroup Icterohaemorrhagiae serovar copenhageni (strain Fiocruz L1-130) protein is Phosphoribosylformylglycinamidine synthase subunit PurL.